The primary structure comprises 836 residues: Translation initiation factor IF-2 (836 aa).

The span at 1 to 17 (MLRLMRQKKLSIQRRTK) shows a compositional bias: basic residues. Disordered regions lie at residues 1 to 43 (MLRL…RTVK) and 83 to 240 (AAKK…KGAA). Residues 18–27 (TTVSSTTTGG) are compositionally biased toward low complexity. Basic and acidic residues predominate over residues 83–153 (AAKKEADEKV…AAEEAKRYAE (71 aa)). Acidic residues predominate over residues 154–167 (ADDSDNESSSEDYS). The span at 192–202 (RGKNKVAKAKK) shows a compositional bias: basic residues. Residues 203–229 (GGRDDENSKNSKNERESNRKNQKDAKF) show a composition bias toward basic and acidic residues. A tr-type G domain is found at 335-505 (TRAPVVTIMG…LLQSEVLELT (171 aa)). The interval 344-351 (GHVDHGKT) is G1. Residue 344-351 (GHVDHGKT) coordinates GTP. The tract at residues 369–373 (GITQH) is G2. The tract at residues 391–394 (DTPG) is G3. Residues 391-395 (DTPGH) and 445-448 (NKID) contribute to the GTP site. The tract at residues 445–448 (NKID) is G4. A G5 region spans residues 481–483 (SAK).

Belongs to the TRAFAC class translation factor GTPase superfamily. Classic translation factor GTPase family. IF-2 subfamily.

The protein localises to the cytoplasm. One of the essential components for the initiation of protein synthesis. Protects formylmethionyl-tRNA from spontaneous hydrolysis and promotes its binding to the 30S ribosomal subunits. Also involved in the hydrolysis of GTP during the formation of the 70S ribosomal complex. This is Translation initiation factor IF-2 from Haemophilus influenzae (strain PittEE).